The chain runs to 160 residues: Phosphopantetheine adenylyltransferase (160 aa).

A substrate-binding site is contributed by Thr10. Residues 10 to 11 and His18 each bind ATP; that span reads TF. Positions 42, 74, and 88 each coordinate substrate. ATP-binding positions include 89-91, Glu99, and 124-130; these read GLR and NSFISST.

It belongs to the bacterial CoaD family. In terms of assembly, homohexamer. Mg(2+) serves as cofactor.

It localises to the cytoplasm. The enzyme catalyses (R)-4'-phosphopantetheine + ATP + H(+) = 3'-dephospho-CoA + diphosphate. It functions in the pathway cofactor biosynthesis; coenzyme A biosynthesis; CoA from (R)-pantothenate: step 4/5. Functionally, reversibly transfers an adenylyl group from ATP to 4'-phosphopantetheine, yielding dephospho-CoA (dPCoA) and pyrophosphate. The chain is Phosphopantetheine adenylyltransferase from Photobacterium damsela subsp. piscicida (Pasteurella piscicida).